We begin with the raw amino-acid sequence, 665 residues long: RNA-directed RNA polymerase (665 aa).

The enzyme catalyses RNA(n) + a ribonucleoside 5'-triphosphate = RNA(n+1) + diphosphate. RNA-dependent RNA polymerase which replicates the viral genome. The sequence is that of RNA-directed RNA polymerase from Atkinsonella hypoxylon (AhV).